Reading from the N-terminus, the 369-residue chain is Muscleblind-like protein 1 (369 aa).

C3H1-type zinc fingers lie at residues 13–41 (WLTL…HPSK), 47–73 (NGRV…HPPP), 178–206 (TDRL…HPAD), and 214–240 (DNTV…HPPA).

Belongs to the muscleblind family.

It localises to the nucleus. The protein localises to the cytoplasm. The protein resides in the cytoplasmic granule. In terms of biological role, involved in pre-mRNA alternative splicing regulation. Binds to CUG triplet repeat in RNA. This Gallus gallus (Chicken) protein is Muscleblind-like protein 1 (MBNL1).